Consider the following 373-residue polypeptide: 4-hydroxy-3-methylbut-2-en-1-yl diphosphate synthase (flavodoxin) (373 aa).

Residues cysteine 270, cysteine 273, cysteine 305, and glutamate 312 each contribute to the [4Fe-4S] cluster site.

Belongs to the IspG family. Requires [4Fe-4S] cluster as cofactor.

It carries out the reaction (2E)-4-hydroxy-3-methylbut-2-enyl diphosphate + oxidized [flavodoxin] + H2O + 2 H(+) = 2-C-methyl-D-erythritol 2,4-cyclic diphosphate + reduced [flavodoxin]. It functions in the pathway isoprenoid biosynthesis; isopentenyl diphosphate biosynthesis via DXP pathway; isopentenyl diphosphate from 1-deoxy-D-xylulose 5-phosphate: step 5/6. Functionally, converts 2C-methyl-D-erythritol 2,4-cyclodiphosphate (ME-2,4cPP) into 1-hydroxy-2-methyl-2-(E)-butenyl 4-diphosphate. The chain is 4-hydroxy-3-methylbut-2-en-1-yl diphosphate synthase (flavodoxin) from Pectobacterium atrosepticum (strain SCRI 1043 / ATCC BAA-672) (Erwinia carotovora subsp. atroseptica).